Consider the following 603-residue polypeptide: Penicillin-binding protein activator LpoA (603 aa).

A signal peptide spans 1 to 26 (MANMTPRKNSVTRLIAPVALALTLAA). Cysteine 27 carries the N-palmitoyl cysteine lipid modification. Residue cysteine 27 is the site of S-diacylglycerol cysteine attachment.

This sequence belongs to the LpoA family. In terms of assembly, interacts with PBP1a.

It is found in the cell outer membrane. Its function is as follows. Regulator of peptidoglycan synthesis that is essential for the function of penicillin-binding protein 1A (PBP1a). The polypeptide is Penicillin-binding protein activator LpoA (Aliivibrio fischeri (strain ATCC 700601 / ES114) (Vibrio fischeri)).